The primary structure comprises 420 residues: Putative kinase Y4mE (420 aa).

The active-site Proton acceptor is the Asp302.

This sequence belongs to the HipA Ser/Thr kinase family.

This is Putative kinase Y4mE from Sinorhizobium fredii (strain NBRC 101917 / NGR234).